Here is a 127-residue protein sequence, read N- to C-terminus: Large ribosomal subunit protein bL17 (127 aa).

Belongs to the bacterial ribosomal protein bL17 family. As to quaternary structure, part of the 50S ribosomal subunit. Contacts protein L32.

The protein is Large ribosomal subunit protein bL17 of Alcanivorax borkumensis (strain ATCC 700651 / DSM 11573 / NCIMB 13689 / SK2).